The primary structure comprises 638 residues: Threonine--tRNA ligase (638 aa).

The TGS domain occupies 1-59 (MEKIKVKIKGKEYEVEKGTPLGKIFELAGIKDALGGVINGKIIDLQTPVRESGEIKPVY). The tract at residues 243 to 536 (DHRRLGKELE…LLEHYAGLLP (294 aa)) is catalytic. Positions 336, 387, and 513 each coordinate Zn(2+).

The protein belongs to the class-II aminoacyl-tRNA synthetase family. In terms of assembly, homodimer. Zn(2+) serves as cofactor.

The protein resides in the cytoplasm. The enzyme catalyses tRNA(Thr) + L-threonine + ATP = L-threonyl-tRNA(Thr) + AMP + diphosphate + H(+). Catalyzes the attachment of threonine to tRNA(Thr) in a two-step reaction: L-threonine is first activated by ATP to form Thr-AMP and then transferred to the acceptor end of tRNA(Thr). Also edits incorrectly charged L-seryl-tRNA(Thr). This chain is Threonine--tRNA ligase, found in Aquifex aeolicus (strain VF5).